The following is a 796-amino-acid chain: Protocadherin beta-3 (796 aa).

The first 26 residues, 1-26 (MEAGGERFLRQRQVLLLFVFLGGSLA), serve as a signal peptide directing secretion. Over 27 to 690 (GSESRRYSVA…AQADLLTVYL (664 aa)) the chain is Extracellular. 5 consecutive Cadherin domains span residues 35–133 (VAEE…SPVF), 138–242 (MHLK…APEF), 247–347 (YEVA…PPEL), 352–451 (VNSP…APAF), and 456–561 (YTLF…SPFV). Asn-169 is a glycosylation site (N-linked (GlcNAc...) asparagine). N-linked (GlcNAc...) asparagine glycans are attached at residues Asn-418 and Asn-436. The N-linked (GlcNAc...) asparagine glycan is linked to Asn-567. The region spanning 568 to 671 (GSAPCTELVP…LVDGFSQPYL (104 aa)) is the Cadherin 6 domain. Residues 691 to 711 (VVALASVSSLFLFSVLLFVAV) form a helical membrane-spanning segment. The Cytoplasmic portion of the chain corresponds to 712 to 796 (RLCRRSRAAS…PSFRKSFEFS (85 aa)).

Its subcellular location is the cell membrane. Functionally, potential calcium-dependent cell-adhesion protein. May be involved in the establishment and maintenance of specific neuronal connections in the brain. The protein is Protocadherin beta-3 (PCDHB3) of Pan troglodytes (Chimpanzee).